Reading from the N-terminus, the 1980-residue chain is Sodium channel protein type 8 subunit alpha (1980 aa).

Disordered regions lie at residues 1-20 (MAAR…FTPE) and 28-62 (RIAE…LEAG). Topologically, residues 1-132 (MAARLLAPPG…RIAIKILIHS (132 aa)) are cytoplasmic. The segment covering 28–61 (RIAESKLKKPPKADGSHREDDEDSKPKPNSDLEA) has biased composition (basic and acidic residues). One copy of the I repeat lies at 114 to 442 (ILSPFNLIRR…KAMLEQLKKQ (329 aa)). The helical transmembrane segment at 133-151 (VFSMIIMCTILTNCVFMTF) threads the bilayer. The Extracellular segment spans residues 152-158 (SNPPDWS). Residues 159 to 179 (KNVEYTFTGIYTFESLVKIIA) traverse the membrane as a helical segment. Residues 180-193 (RGFCIDGFTFLRDP) lie on the Cytoplasmic side of the membrane. The chain crosses the membrane as a helical span at residues 194–211 (WNWLDFSVIMMAYITEFV). At 212 to 217 (NLGNVS) the chain is on the extracellular side. N-linked (GlcNAc...) asparagine glycosylation is present at Asn215. A helical transmembrane segment spans residues 218–234 (ALRTFRVLRALKTISVI). Residues 235–253 (PGLKTIVGALIQSVKKLSD) lie on the Cytoplasmic side of the membrane. Residues 254–273 (VMILTVFCLSVFALIGLQLF) form a helical membrane-spanning segment. The Extracellular segment spans residues 274-355 (MGNLRNKCVV…PNYGYTSFDT (82 aa)). A disulfide bridge links Cys281 with Cys333. 3 N-linked (GlcNAc...) asparagine glycosylation sites follow: Asn289, Asn295, and Asn308. An N-linked (GlcNAc...) (high mannose) asparagine glycan is attached at Asn326. Residues 356 to 380 (FSWAFLALFRLMTQDYWENLYQLTL) constitute an intramembrane region (pore-forming). Glu373 contributes to the Na(+) binding site. Residues 381–387 (RAAGKTY) are Extracellular-facing. The helical transmembrane segment at 388–408 (MIFFVLVIFVGSFYLVNLILA) threads the bilayer. Residues 409–753 (VVAMAYEEQN…EIVNLIVMDP (345 aa)) lie on the Cytoplasmic side of the membrane. 2 disordered regions span residues 446 to 530 (AQAA…KAFR) and 568 to 602 (FRGP…DSLF). Residues 474-486 (PRSSSEISKLSSK) are compositionally biased toward low complexity. Residues 489–500 (KERRNRRKKRKQ) show a composition bias toward basic residues. 2 stretches are compositionally biased toward basic and acidic residues: residues 501–530 (KELS…KAFR) and 586–602 (DEHS…DSLF). Residues Ser518 and Ser520 each carry the phosphoserine modification. The II repeat unit spans residues 735-1007 (CHPYWIKLKE…QISVIRIKKG (273 aa)). Residues 754–772 (FVDLAITICIVLNTLFMAM) form a helical membrane-spanning segment. Over 773-783 (EHHPMTPQFEH) the chain is Extracellular. A helical transmembrane segment spans residues 784 to 803 (VLAVGNLVFTGIFTAEMFLK). At 804–817 (LIAMDPYYYFQEGW) the chain is on the cytoplasmic side. The helical transmembrane segment at 818–837 (NIFDGFIVSLSLMELSLADV) threads the bilayer. Topologically, residues 838–839 (EG) are extracellular. A helical membrane pass occupies residues 840 to 857 (LSVLRSFRLLRVFKLAKS). Over 858–873 (WPTLNMLIKIIGNSVG) the chain is Cytoplasmic. The chain crosses the membrane as a helical span at residues 874–892 (ALGNLTLVLAIIVFIFAVV). The Extracellular portion of the chain corresponds to 893–921 (GMQLFGKSYKECVCKINQDCELPRWHMHD). Cys906 and Cys912 form a disulfide bridge. An intramembrane region (pore-forming) is located at residues 922–942 (FFHSFLIVFRVLCGEWIETMW). The Na(+) site is built by Glu936 and Glu939. At 943 to 955 (DCMEVAGQAMCLI) the chain is on the extracellular side. A disulfide bridge links Cys944 with Cys953. Residues 956-976 (VFMMVMVIGNLVVLNLFLALL) form a helical membrane-spanning segment. The Cytoplasmic portion of the chain corresponds to 977-1199 (LSSFSADNLA…TCFLIVEHNW (223 aa)). The tract at residues 1107–1148 (NLNTEDVSSESDPEGSKDKLDDTSSSEGSTIDIKPEVEEVPV) is disordered. Residues 1180 to 1495 (LGKSWWILRK…KKYYNAMKKL (316 aa)) form an III repeat. Residues 1200 to 1217 (FETFIIFMILLSSGALAF) traverse the membrane as a helical segment. Residues 1218-1230 (EDIYIEQRKTIRT) are Extracellular-facing. Residues 1231–1249 (ILEYADKVFTYIFILEMLL) traverse the membrane as a helical segment. Over 1250–1263 (KWTAYGFVKFFTNA) the chain is Cytoplasmic. A helical membrane pass occupies residues 1264–1282 (WCWLDFLIVAVSLVSLIAN). Topologically, residues 1283–1290 (ALGYSELG) are extracellular. Residues 1291 to 1309 (AIKSLRTLRALRPLRALSR) form a helical membrane-spanning segment. Over 1310–1326 (FEGMRVVVNALVGAIPS) the chain is Cytoplasmic. A helical transmembrane segment spans residues 1327 to 1346 (IMNVLLVCLIFWLIFSIMGV). Over 1347 to 1399 (NLFAGKYHYCFNETSEIRFEIEDVNNKTECEKLMEGNNTEIRWKNVKINFDNV) the chain is Extracellular. Cysteines 1356 and 1376 form a disulfide. Residues Asn1358, Asn1372, and Asn1383 are each glycosylated (N-linked (GlcNAc...) asparagine). The segment at residues 1400 to 1421 (GAGYLALLQVATFKGWMDIMYA) is an intramembrane region (pore-forming). Topologically, residues 1422 to 1438 (AVDSRKPDEQPKYEDNI) are extracellular. A helical membrane pass occupies residues 1439–1460 (YMYIYFVIFIIFGSFFTLNLFI). The Cytoplasmic portion of the chain corresponds to 1461–1523 (GVIIDNFNQQ…IVFDFVTQQA (63 aa)). Ser1497 is modified (phosphoserine; by PKC). The IV repeat unit spans residues 1504–1801 (IPRPLNKIQG…WEKFDPDATQ (298 aa)). The helical transmembrane segment at 1524 to 1541 (FDIVIMMLICLNMVTMMV) threads the bilayer. At 1542 to 1552 (ETDTQSKQMEN) the chain is on the extracellular side. The helical transmembrane segment at 1553–1571 (ILYWINLVFVIFFTCECVL) threads the bilayer. The Cytoplasmic segment spans residues 1572-1583 (KMFALRHYYFTI). Residues 1584 to 1601 (GWNIFDFVVVILSIVGMF) traverse the membrane as a helical segment. Over 1602 to 1614 (LADIIEKYFVSPT) the chain is Extracellular. A helical membrane pass occupies residues 1615-1631 (LFRVIRLARIGRILRLI). The Cytoplasmic portion of the chain corresponds to 1632 to 1650 (KGAKGIRTLLFALMMSLPA). Residues 1651 to 1668 (LFNIGLLLFLVMFIFSIF) traverse the membrane as a helical segment. The Extracellular segment spans residues 1669–1690 (GMSNFAYVKHEAGIDDMFNFET). An intramembrane region (pore-forming) is located at residues 1691–1713 (FGNSMICLFQITTSAGWDGLLLP). The Extracellular portion of the chain corresponds to 1714–1742 (ILNRPPDCSLDKEHPGSGFKGDCGNPSVG). An intrachain disulfide couples Cys1721 to Cys1736. A helical membrane pass occupies residues 1743 to 1765 (IFFFVSYIIISFLIVVNMYIAII). Over 1766-1980 (LENFSVATEE…RQKEVRESKC (215 aa)) the chain is Cytoplasmic. The 30-residue stretch at 1895 to 1924 (EEVSAVVLQRAYRGHLARRGFICKKTTSNK) folds into the IQ domain. The interval 1922-1980 (SNKLENGGTHREKKESTPSTASLPSYDSVTKPEKEKQQRAEEGRRERAKRQKEVRESKC) is disordered. The span at 1938 to 1949 (TPSTASLPSYDS) shows a compositional bias: polar residues. Residues 1951-1980 (TKPEKEKQQRAEEGRRERAKRQKEVRESKC) are compositionally biased toward basic and acidic residues.

It belongs to the sodium channel (TC 1.A.1.10) family. Nav1.6/SCN8A subfamily. The voltage-sensitive sodium channel consists of an ion-conducting pore-forming alpha subunit regulated by one or more beta-1 (SCN1B), beta-2 (SCN2B), beta-3 (SCN3B) and/or beta-4 (SCN4B) subunits. Beta-1 (SCN1B) and beta-3 (SCN3B) are non-covalently associated with alpha, while beta-2 (SCN2B) and beta-4 (SCN4B) are covalently linked by disulfide bonds. Interacts with NEDD4 and NEDD4L. Interacts with FGF13. Interacts with FGF14, GBG3, GBB2 and SCN1B. Interacts with TMEM233. Interacts with the conotoxin GVIIJ. Interacts with the spider beta/delta-theraphotoxin-Pre1a. Interacts with CALM1; the interaction modulates the inactivation rate of SCN8A. May be ubiquitinated by NEDD4L; which would promote its endocytosis. Post-translationally, phosphorylation at Ser-1497 by PKC in a highly conserved cytoplasmic loop slows inactivation of the sodium channel and reduces peak sodium currents. Expressed in the hippocampus with increased expression in epileptic tissue compared to normal adjacent tissue (at protein level). As to expression, expressed in non-neuronal tissues, such as monocytes/macrophages.

The protein resides in the cell membrane. The protein localises to the cell projection. It localises to the axon. It is found in the cytoplasmic vesicle. Its subcellular location is the podosome. It catalyses the reaction Na(+)(in) = Na(+)(out). With respect to regulation, inhibited by tetrodotoxin and, more weakly, by its metabolite 4,9-ah-tetrodotoxin. In terms of biological role, pore-forming subunit of a voltage-gated sodium channel complex assuming opened or closed conformations in response to the voltage difference across membranes and through which sodium ions selectively pass along their electrochemical gradient. Contributes to neuronal excitability by regulating action potential threshold and propagation. Its function is as follows. More specifically expressed in non-neuronal cells, could play a role in sodium release from intracellular compartments and participate in the control of podosomes formation and macrophages adhesion and movement. This Homo sapiens (Human) protein is Sodium channel protein type 8 subunit alpha.